The chain runs to 100 residues: Large ribosomal subunit protein bL28 (100 aa).

The protein belongs to the bacterial ribosomal protein bL28 family.

The chain is Large ribosomal subunit protein bL28 from Ehrlichia chaffeensis (strain ATCC CRL-10679 / Arkansas).